We begin with the raw amino-acid sequence, 258 residues long: UPF0246 protein CGSHiEE_07045 (258 aa).

This sequence belongs to the UPF0246 family.

This Haemophilus influenzae (strain PittEE) protein is UPF0246 protein CGSHiEE_07045.